Here is a 256-residue protein sequence, read N- to C-terminus: Hypodermin-A (256 aa).

The first 22 residues, 1-22, serve as a signal peptide directing secretion; that stretch reads MLKFVILLCSIAYVFGAVVPLG. Positions 23 to 30 are cleaved as a propeptide — activation peptide; it reads MLSQSDGR. One can recognise a Peptidase S1 domain in the interval 31–254; the sequence is IVGGVESKIE…VRSLIVSNAE (224 aa). A disulfide bridge links C56 with C72. Catalysis depends on charge relay system residues H71 and D116. Disulfide bonds link C180–C197 and C206–C230. The active-site Charge relay system is the S210.

This sequence belongs to the peptidase S1 family.

It localises to the secreted. In terms of biological role, specificity, limited to carboxyl side of arginine residue in B-chain of insulin. The polypeptide is Hypodermin-A (Hypoderma lineatum (Early cattle grub)).